We begin with the raw amino-acid sequence, 158 residues long: Large ribosomal subunit protein uL16 (158 aa).

Belongs to the universal ribosomal protein uL16 family. As to quaternary structure, part of the 50S ribosomal subunit.

Functionally, binds 23S rRNA and is also seen to make contacts with the A and possibly P site tRNAs. The protein is Large ribosomal subunit protein uL16 of Prochlorococcus marinus (strain MIT 9313).